Here is a 147-residue protein sequence, read N- to C-terminus: UPF0306 protein YhbP (147 aa).

Belongs to the UPF0306 family.

This is UPF0306 protein YhbP from Escherichia coli O7:K1 (strain IAI39 / ExPEC).